Here is a 167-residue protein sequence, read N- to C-terminus: NAD(P)H-quinone oxidoreductase subunit I, chloroplastic (167 aa).

2 consecutive 4Fe-4S ferredoxin-type domains span residues 55–84 and 95–124; these read GRIHFEFDKCIACEVCVRVCPIDLPVVDWK and LNYSIDFGICIFCGNCVEYCPTNCLSMTEE. 8 residues coordinate [4Fe-4S] cluster: Cys-64, Cys-67, Cys-70, Cys-74, Cys-104, Cys-107, Cys-110, and Cys-114.

This sequence belongs to the complex I 23 kDa subunit family. NDH is composed of at least 16 different subunits, 5 of which are encoded in the nucleus. [4Fe-4S] cluster is required as a cofactor.

The protein resides in the plastid. It is found in the chloroplast thylakoid membrane. It carries out the reaction a plastoquinone + NADH + (n+1) H(+)(in) = a plastoquinol + NAD(+) + n H(+)(out). It catalyses the reaction a plastoquinone + NADPH + (n+1) H(+)(in) = a plastoquinol + NADP(+) + n H(+)(out). Its function is as follows. NDH shuttles electrons from NAD(P)H:plastoquinone, via FMN and iron-sulfur (Fe-S) centers, to quinones in the photosynthetic chain and possibly in a chloroplast respiratory chain. The immediate electron acceptor for the enzyme in this species is believed to be plastoquinone. Couples the redox reaction to proton translocation, and thus conserves the redox energy in a proton gradient. The protein is NAD(P)H-quinone oxidoreductase subunit I, chloroplastic of Pelargonium hortorum (Common geranium).